Reading from the N-terminus, the 119-residue chain is Ribosome-binding factor A (119 aa).

This sequence belongs to the RbfA family. As to quaternary structure, monomer. Binds 30S ribosomal subunits, but not 50S ribosomal subunits or 70S ribosomes.

It is found in the cytoplasm. One of several proteins that assist in the late maturation steps of the functional core of the 30S ribosomal subunit. Associates with free 30S ribosomal subunits (but not with 30S subunits that are part of 70S ribosomes or polysomes). Required for efficient processing of 16S rRNA. May interact with the 5'-terminal helix region of 16S rRNA. The protein is Ribosome-binding factor A of Chlorobium limicola (strain DSM 245 / NBRC 103803 / 6330).